Reading from the N-terminus, the 222-residue chain is MQPLSPAFIDQLRFNEAGLIPAIAQDWLDGAVLMVAWMNRESIQQTLNSGEAHYWSRSRQELWHKGATSGHTQTLRSIRYDCDADVLLLTIEQRGDIACHTGARSCFYEGGDQRSDGGSNALSPPADACTELFRVIESRRDNPEEGSYTNKLLEGGDNKILKKIGEESAEFVMACKDDNPEEIAGEAADILFHMQVALAHHGVSWRQVQEVLAARRGAPRRH.

The segment at 1 to 128 is phosphoribosyl-AMP cyclohydrolase; the sequence is MQPLSPAFID…SNALSPPADA (128 aa). Positions 129 to 222 are phosphoribosyl-ATP pyrophosphohydrolase; the sequence is CTELFRVIES…AARRGAPRRH (94 aa).

This sequence in the N-terminal section; belongs to the PRA-CH family. The protein in the C-terminal section; belongs to the PRA-PH family.

Its subcellular location is the cytoplasm. It carries out the reaction 1-(5-phospho-beta-D-ribosyl)-ATP + H2O = 1-(5-phospho-beta-D-ribosyl)-5'-AMP + diphosphate + H(+). It catalyses the reaction 1-(5-phospho-beta-D-ribosyl)-5'-AMP + H2O = 1-(5-phospho-beta-D-ribosyl)-5-[(5-phospho-beta-D-ribosylamino)methylideneamino]imidazole-4-carboxamide. It participates in amino-acid biosynthesis; L-histidine biosynthesis; L-histidine from 5-phospho-alpha-D-ribose 1-diphosphate: step 2/9. The protein operates within amino-acid biosynthesis; L-histidine biosynthesis; L-histidine from 5-phospho-alpha-D-ribose 1-diphosphate: step 3/9. The protein is Histidine biosynthesis bifunctional protein HisIE of Parasynechococcus marenigrum (strain WH8102).